Consider the following 320-residue polypeptide: o-succinylbenzoate synthase (320 aa).

Residue lysine 133 is the Proton donor of the active site. Aspartate 161, glutamate 190, and aspartate 213 together coordinate Mg(2+). Lysine 235 serves as the catalytic Proton acceptor.

Belongs to the mandelate racemase/muconate lactonizing enzyme family. MenC type 1 subfamily. Requires a divalent metal cation as cofactor.

The catalysed reaction is (1R,6R)-6-hydroxy-2-succinyl-cyclohexa-2,4-diene-1-carboxylate = 2-succinylbenzoate + H2O. The protein operates within quinol/quinone metabolism; 1,4-dihydroxy-2-naphthoate biosynthesis; 1,4-dihydroxy-2-naphthoate from chorismate: step 4/7. It functions in the pathway quinol/quinone metabolism; menaquinone biosynthesis. Functionally, converts 2-succinyl-6-hydroxy-2,4-cyclohexadiene-1-carboxylate (SHCHC) to 2-succinylbenzoate (OSB). The sequence is that of o-succinylbenzoate synthase from Salmonella choleraesuis (strain SC-B67).